The primary structure comprises 172 residues: Adenine phosphoribosyltransferase (172 aa).

Belongs to the purine/pyrimidine phosphoribosyltransferase family. Homodimer.

The protein resides in the cytoplasm. The enzyme catalyses AMP + diphosphate = 5-phospho-alpha-D-ribose 1-diphosphate + adenine. It functions in the pathway purine metabolism; AMP biosynthesis via salvage pathway; AMP from adenine: step 1/1. Catalyzes a salvage reaction resulting in the formation of AMP, that is energically less costly than de novo synthesis. This Clostridium novyi (strain NT) protein is Adenine phosphoribosyltransferase.